Here is a 460-residue protein sequence, read N- to C-terminus: L-seryl-tRNA(Sec) selenium transferase (460 aa).

Lys-293 carries the post-translational modification N6-(pyridoxal phosphate)lysine.

This sequence belongs to the SelA family. Pyridoxal 5'-phosphate serves as cofactor.

It is found in the cytoplasm. It catalyses the reaction L-seryl-tRNA(Sec) + selenophosphate + H(+) = L-selenocysteinyl-tRNA(Sec) + phosphate. Its pathway is aminoacyl-tRNA biosynthesis; selenocysteinyl-tRNA(Sec) biosynthesis; selenocysteinyl-tRNA(Sec) from L-seryl-tRNA(Sec) (bacterial route): step 1/1. Its function is as follows. Converts seryl-tRNA(Sec) to selenocysteinyl-tRNA(Sec) required for selenoprotein biosynthesis. The protein is L-seryl-tRNA(Sec) selenium transferase of Pasteurella multocida (strain Pm70).